The following is a 197-amino-acid chain: Putative peptidyl-prolyl cis-trans isomerase (197 aa).

A PPIase cyclophilin-type domain is found at 14 to 195 (NEIKVVMHTN…YDVVIESIDV (182 aa)).

It belongs to the cyclophilin-type PPIase family.

It catalyses the reaction [protein]-peptidylproline (omega=180) = [protein]-peptidylproline (omega=0). Its function is as follows. PPIases accelerate the folding of proteins. It catalyzes the cis-trans isomerization of proline imidic peptide bonds in oligopeptides. This Staphylococcus epidermidis (strain ATCC 35984 / DSM 28319 / BCRC 17069 / CCUG 31568 / BM 3577 / RP62A) protein is Putative peptidyl-prolyl cis-trans isomerase.